A 352-amino-acid chain; its full sequence is Enhancer of mRNA-decapping protein 1 (352 aa).

Disordered regions lie at residues 1–258 (MMAH…PRNH) and 277–352 (QYPQ…SSKS). Positions 71–80 (HTSSNTSNNK) are enriched in low complexity. 2 stretches are compositionally biased toward polar residues: residues 93–104 (NFGNESSHQNGG) and 205–225 (TEPN…SVNV). The span at 289-309 (GGVYPMVAPQYQQQPQQHPQQ) shows a compositional bias: low complexity.

This sequence belongs to the EDC family.

It is found in the cytoplasm. Its function is as follows. mRNA-binding protein which stimulates mRNA decapping. The polypeptide is Enhancer of mRNA-decapping protein 1 (EDC1) (Debaryomyces hansenii (strain ATCC 36239 / CBS 767 / BCRC 21394 / JCM 1990 / NBRC 0083 / IGC 2968) (Yeast)).